A 234-amino-acid polypeptide reads, in one-letter code: Glucosamine-6-phosphate deaminase (234 aa).

Asp-62 (proton acceptor; for enolization step) is an active-site residue. Asn-128 acts as the For ring-opening step in catalysis. His-130 acts as the Proton acceptor; for ring-opening step in catalysis. The active-site For ring-opening step is Glu-135.

Belongs to the glucosamine/galactosamine-6-phosphate isomerase family. NagB subfamily.

The catalysed reaction is alpha-D-glucosamine 6-phosphate + H2O = beta-D-fructose 6-phosphate + NH4(+). The protein operates within amino-sugar metabolism; N-acetylneuraminate degradation; D-fructose 6-phosphate from N-acetylneuraminate: step 5/5. Catalyzes the reversible isomerization-deamination of glucosamine 6-phosphate (GlcN6P) to form fructose 6-phosphate (Fru6P) and ammonium ion. This Streptococcus pyogenes serotype M49 (strain NZ131) protein is Glucosamine-6-phosphate deaminase.